A 209-amino-acid chain; its full sequence is ATP phosphoribosyltransferase (209 aa).

Belongs to the ATP phosphoribosyltransferase family. Short subfamily. Heteromultimer composed of HisG and HisZ subunits.

It is found in the cytoplasm. The enzyme catalyses 1-(5-phospho-beta-D-ribosyl)-ATP + diphosphate = 5-phospho-alpha-D-ribose 1-diphosphate + ATP. Its pathway is amino-acid biosynthesis; L-histidine biosynthesis; L-histidine from 5-phospho-alpha-D-ribose 1-diphosphate: step 1/9. Its function is as follows. Catalyzes the condensation of ATP and 5-phosphoribose 1-diphosphate to form N'-(5'-phosphoribosyl)-ATP (PR-ATP). Has a crucial role in the pathway because the rate of histidine biosynthesis seems to be controlled primarily by regulation of HisG enzymatic activity. The chain is ATP phosphoribosyltransferase from Caldicellulosiruptor bescii (strain ATCC BAA-1888 / DSM 6725 / KCTC 15123 / Z-1320) (Anaerocellum thermophilum).